We begin with the raw amino-acid sequence, 890 residues long: Nitrate reductase [NADH] 2 (890 aa).

Mo-molybdopterin is bound at residue Cys165. A Cytochrome b5 heme-binding domain is found at 513–588 (SKMFSVSEVK…LEDYRIGELI (76 aa)). Residues His548 and His571 each coordinate heme. The FAD-binding FR-type domain occupies 634–746 (RQKIPCKLVS…KGPLGHIEYT (113 aa)). Residues 686 to 689 (RAYT), 703 to 707 (LIKVY), Phe708, Phe715, 720 to 722 (LMS), and Thr773 contribute to the FAD site.

This sequence belongs to the nitrate reductase family. As to quaternary structure, homodimer. It depends on FAD as a cofactor. Requires heme as cofactor. Mo-molybdopterin serves as cofactor.

It catalyses the reaction nitrite + NAD(+) + H2O = nitrate + NADH + H(+). Nitrate reductase is a key enzyme involved in the first step of nitrate assimilation in plants, fungi and bacteria. This is Nitrate reductase [NADH] 2 (NIA2) from Phaseolus vulgaris (Kidney bean).